The chain runs to 275 residues: Replication protein A 32 kDa subunit (275 aa).

The disordered stretch occupies residues M23–Q47. Residues V76–P150 constitute a DNA-binding region (OB).

Belongs to the replication factor A protein 2 family. In terms of assembly, component of the replication protein A complex (RPA/RP-A), a heterotrimeric complex composed of RPA1, RPA2 and RPA3. Post-translationally, differentially phosphorylated throughout the cell cycle, becoming phosphorylated at the G1-S transition and dephosphorylated in late mitosis. Phosphorylation increases upon replication fork stalling.

It is found in the nucleus. Its subcellular location is the PML body. As part of the heterotrimeric replication protein A complex (RPA/RP-A), binds and stabilizes single-stranded DNA intermediates, that form during DNA replication or upon DNA stress. It prevents their reannealing and in parallel, recruits and activates different proteins and complexes involved in DNA metabolism. Thereby, it plays an essential role both in DNA replication and the cellular response to DNA damage. The chain is Replication protein A 32 kDa subunit (rpa2) from Xenopus tropicalis (Western clawed frog).